The primary structure comprises 125 residues: Protein ApaG (125 aa).

The region spanning 1–125 (MADSPRVCVQ…FRLAVPTLIH (125 aa)) is the ApaG domain.

In Cronobacter sakazakii (strain ATCC BAA-894) (Enterobacter sakazakii), this protein is Protein ApaG.